The chain runs to 117 residues: Large ribosomal subunit protein bL20 (117 aa).

This sequence belongs to the bacterial ribosomal protein bL20 family.

Binds directly to 23S ribosomal RNA and is necessary for the in vitro assembly process of the 50S ribosomal subunit. It is not involved in the protein synthesizing functions of that subunit. The polypeptide is Large ribosomal subunit protein bL20 (Leptospira interrogans serogroup Icterohaemorrhagiae serovar copenhageni (strain Fiocruz L1-130)).